The following is a 129-amino-acid chain: UPF0344 protein SAR0931 (129 aa).

The next 4 membrane-spanning stretches (helical) occupy residues 1–21 (MLHL…ATYL), 36–56 (LHMV…WILI), 67–87 (MLLT…EVSI), and 99–119 (MFWI…ILPL).

The protein belongs to the UPF0344 family.

The protein localises to the cell membrane. The chain is UPF0344 protein SAR0931 from Staphylococcus aureus (strain MRSA252).